Reading from the N-terminus, the 338-residue chain is Taste receptor type 2 member 39 (338 aa).

The Extracellular portion of the chain corresponds to Met-1–Ser-30. A helical membrane pass occupies residues Pro-31–Ala-51. Residues Asn-52–Arg-74 are Cytoplasmic-facing. A helical transmembrane segment spans residues Ile-75–Thr-95. Residues Ile-96 to Ser-116 lie on the Extracellular side of the membrane. Residues Phe-117–Val-137 traverse the membrane as a helical segment. The Cytoplasmic portion of the chain corresponds to Lys-138–Gly-156. Residues Leu-157 to Ile-177 traverse the membrane as a helical segment. At Asn-178–Asn-205 the chain is on the extracellular side. N-linked (GlcNAc...) asparagine glycosylation is found at Asn-185 and Asn-194. The helical transmembrane segment at Val-206–Leu-226 threads the bilayer. Over Thr-227–Lys-262 the chain is Cytoplasmic. A helical membrane pass occupies residues Ala-263 to Ser-283. The Extracellular segment spans residues Asn-284–Leu-291. Residues Trp-292–Ile-312 traverse the membrane as a helical segment. Topologically, residues Gln-313–Leu-338 are cytoplasmic.

The protein belongs to the G-protein coupled receptor T2R family.

It localises to the membrane. Its function is as follows. Receptor that may play a role in the perception of bitterness and is gustducin-linked. May play a role in sensing the chemical composition of the gastrointestinal content. The activity of this receptor may stimulate alpha gustducin, mediate PLC-beta-2 activation and lead to the gating of TRPM5. The sequence is that of Taste receptor type 2 member 39 (TAS2R39) from Gorilla gorilla gorilla (Western lowland gorilla).